The chain runs to 360 residues: Peptide chain release factor 1 (360 aa).

Glutamine 235 carries the N5-methylglutamine modification. Basic and acidic residues predominate over residues alanine 284–threonine 293. The segment at alanine 284 to glutamine 314 is disordered.

It belongs to the prokaryotic/mitochondrial release factor family. Post-translationally, methylated by PrmC. Methylation increases the termination efficiency of RF1.

The protein localises to the cytoplasm. Peptide chain release factor 1 directs the termination of translation in response to the peptide chain termination codons UAG and UAA. This Erwinia tasmaniensis (strain DSM 17950 / CFBP 7177 / CIP 109463 / NCPPB 4357 / Et1/99) protein is Peptide chain release factor 1.